The primary structure comprises 315 residues: Small ribosomal subunit protein uS9m (315 aa).

A mitochondrion-targeting transit peptide spans 1-42; it reads MMASLRHSITSALRSSRQGCSKSAQWQSLDQQFGALRISSRS. A disordered region spans residues 293 to 315; it reads PRKVERKKHGHVKARKMPTWVKR. The span at 296–315 shows a compositional bias: basic residues; it reads VERKKHGHVKARKMPTWVKR.

Belongs to the universal ribosomal protein uS9 family. As to quaternary structure, component of the mitochondrial small ribosomal subunit (mt-SSU). Mature N.crassa 74S mitochondrial ribosomes consist of a small (37S) and a large (54S) subunit. The 37S small subunit contains a 16S ribosomal RNA (16S mt-rRNA) and 32 different proteins. The 54S large subunit contains a 23S rRNA (23S mt-rRNA) and 42 different proteins.

It is found in the mitochondrion. Component of the mitochondrial ribosome (mitoribosome), a dedicated translation machinery responsible for the synthesis of mitochondrial genome-encoded proteins, including at least some of the essential transmembrane subunits of the mitochondrial respiratory chain. The mitoribosomes are attached to the mitochondrial inner membrane and translation products are cotranslationally integrated into the membrane. This is Small ribosomal subunit protein uS9m (mrp-9) from Neurospora crassa (strain ATCC 24698 / 74-OR23-1A / CBS 708.71 / DSM 1257 / FGSC 987).